We begin with the raw amino-acid sequence, 339 residues long: MAEASSDPGAEEREELLGPTAQWSVEDEEEAVHEQCQHERDRQLQAQDEEGGGHVPERPKQEMLLSLKPSEAPELDEDEGFGDWSQRPEQRQQHEGAQGALDSGEPPQCRSPEGEQEDRPGLHAYEKEDSDEVHLEELSLSKEGPGPEDTVQDNLGAAGAEEEQEEHQKCQQPRTPSPLVLEGTIEQSSPPLSPTTKLIDRTESLNRSIEKSNSVKKSQPDLPISKIDQWLEQYTQAIETAGRTPKLARQASIELPSMAVASTKSRWETGEVQAQSAAKTPSCKDIVAGDMSKKSLWEQKGGSKTSSTIKSTPSGKRYKFVATGHGKYEKVLVEGGPAP.

Positions 1–198 are disordered; sequence MAEASSDPGA…SPPLSPTTKL (198 aa). Residue serine 24 is modified to Phosphoserine. Basic and acidic residues-rich tracts occupy residues 32 to 43 and 51 to 61; these read VHEQCQHERDRQ and GGGHVPERPKQ. Serine 111 is modified (phosphoserine). Positions 117-140 are enriched in basic and acidic residues; that stretch reads EDRPGLHAYEKEDSDEVHLEELSL. At threonine 175 the chain carries Phosphothreonine. Phosphoserine is present on residues serine 177, serine 188, serine 189, and serine 193. A compositionally biased stretch (polar residues) spans 185 to 196; sequence IEQSSPPLSPTT. Serine 252 bears the Phosphoserine; by MAPKAPK2 mark. The disordered stretch occupies residues 294–315; it reads KSLWEQKGGSKTSSTIKSTPSG. Low complexity predominate over residues 300–315; it reads KGGSKTSSTIKSTPSG. Residue lysine 327 is modified to N6-acetyllysine.

As to quaternary structure, binds actin. Post-translationally, phosphorylated by casein kinase II, protein kinase C and MAPKAPK2. Phosphorylation by PKC induces translocation from membrane to cytoplasm. Phosphorylation by MAPKAPK2 may regulate neutrophil chemotaxis. In terms of tissue distribution, activated T-lymphocytes.

Its subcellular location is the cell membrane. In terms of biological role, may play a role in mediating neutrophil activation and chemotaxis. This is Lymphocyte-specific protein 1 (LSP1) from Homo sapiens (Human).